Here is a 493-residue protein sequence, read N- to C-terminus: Glutamyl-tRNA(Gln) amidotransferase subunit A (493 aa).

Residues lysine 78 and serine 158 each act as charge relay system in the active site. The active-site Acyl-ester intermediate is serine 182.

This sequence belongs to the amidase family. GatA subfamily. As to quaternary structure, heterotrimer of A, B and C subunits.

It carries out the reaction L-glutamyl-tRNA(Gln) + L-glutamine + ATP + H2O = L-glutaminyl-tRNA(Gln) + L-glutamate + ADP + phosphate + H(+). In terms of biological role, allows the formation of correctly charged Gln-tRNA(Gln) through the transamidation of misacylated Glu-tRNA(Gln) in organisms which lack glutaminyl-tRNA synthetase. The reaction takes place in the presence of glutamine and ATP through an activated gamma-phospho-Glu-tRNA(Gln). In Rickettsia africae (strain ESF-5), this protein is Glutamyl-tRNA(Gln) amidotransferase subunit A.